A 100-amino-acid chain; its full sequence is MANNKSSKKRVQIAERNRLENKSYKSAMRTLMKRCFSACSNYSQQPGETAKANVKASIDSAFSKIDKAVKRGVLHRNTAAHQKSRLSAAVKQAIEPAPST.

The interval 79–100 is disordered; it reads AAHQKSRLSAAVKQAIEPAPST.

It belongs to the bacterial ribosomal protein bS20 family.

Its function is as follows. Binds directly to 16S ribosomal RNA. This chain is Small ribosomal subunit protein bS20, found in Prochlorococcus marinus (strain MIT 9303).